Consider the following 527-residue polypeptide: MSDLLSRRLALLGAAANLPLLTECLHGIERECLRVDSDGKLALTPHPRALGSTLTHPQITTDYSEALLEFITPTETDVADTLGDLERIHRFASSQLDGEYLWSPSMPCELPDEESIPIARYGNSMIGRLKYVYRKGLALRYGKTMQCIAGIHYNFSLPEKLWPLLRQAEGSELAERDYQSAAYIALIRNFRRYSWLLMYLFGASPALDAGFLRGRPSQLERFDEHTLYLPYATSLRMSDLGYQNNAQAGLTPCYNDLQSYIDSLRKAVSTPYPAYEKIGTKQDGEWVQLNTNVLQIENEYYSSIRPKRVTYTGERPVQALAARGVQYVEVRCLDINPFLPLGIDLDEARFLDAFLLFCAFSDSPLLNGECSDATDNFLAVVKEGRRPGLQLRRRGQPVELKDWASELLERIADTAALLDRARGGEAHAAALAAQRAKVADPELTPSAQVLKVMRERGESFEAFSLRQSREHAEYFRQHPLAADEQARFEQMASASLAEQAELERDQDGDFDTFVAAYQASILGLISN.

It belongs to the glutamate--cysteine ligase type 1 family. Type 1 subfamily.

It catalyses the reaction L-cysteine + L-glutamate + ATP = gamma-L-glutamyl-L-cysteine + ADP + phosphate + H(+). It participates in sulfur metabolism; glutathione biosynthesis; glutathione from L-cysteine and L-glutamate: step 1/2. This Pseudomonas paraeruginosa (strain DSM 24068 / PA7) (Pseudomonas aeruginosa (strain PA7)) protein is Glutamate--cysteine ligase.